The following is a 397-amino-acid chain: Elongation factor Tu (397 aa).

One can recognise a tr-type G domain in the interval 10–207; that stretch reads KPHVNVGTIG…TLDTYIPEPE (198 aa). A G1 region spans residues 19-26; sequence GHVDHGKT. Residue 19–26 coordinates GTP; it reads GHVDHGKT. Thr-26 serves as a coordination point for Mg(2+). The segment at 60–64 is G2; the sequence is GITIN. Residues 81 to 84 form a G3 region; that stretch reads DCPG. GTP-binding positions include 81–85 and 136–139; these read DCPGH and NKAD. Residues 136–139 are G4; it reads NKAD. The tract at residues 174–176 is G5; it reads SAL.

It belongs to the TRAFAC class translation factor GTPase superfamily. Classic translation factor GTPase family. EF-Tu/EF-1A subfamily. Monomer.

The protein resides in the cytoplasm. It carries out the reaction GTP + H2O = GDP + phosphate + H(+). GTP hydrolase that promotes the GTP-dependent binding of aminoacyl-tRNA to the A-site of ribosomes during protein biosynthesis. The polypeptide is Elongation factor Tu (Pseudomonas fluorescens (strain ATCC BAA-477 / NRRL B-23932 / Pf-5)).